We begin with the raw amino-acid sequence, 103 residues long: Large ribosomal subunit protein bL21 (103 aa).

This sequence belongs to the bacterial ribosomal protein bL21 family. As to quaternary structure, part of the 50S ribosomal subunit. Contacts protein L20.

This protein binds to 23S rRNA in the presence of protein L20. This chain is Large ribosomal subunit protein bL21, found in Bordetella petrii (strain ATCC BAA-461 / DSM 12804 / CCUG 43448).